The sequence spans 447 residues: Phosphoglucosamine mutase (447 aa).

The active-site Phosphoserine intermediate is the S100. S100, D239, D241, and D243 together coordinate Mg(2+). S100 carries the phosphoserine modification.

It belongs to the phosphohexose mutase family. Mg(2+) is required as a cofactor. Post-translationally, activated by phosphorylation.

It carries out the reaction alpha-D-glucosamine 1-phosphate = D-glucosamine 6-phosphate. Catalyzes the conversion of glucosamine-6-phosphate to glucosamine-1-phosphate. This is Phosphoglucosamine mutase from Halalkalibacterium halodurans (strain ATCC BAA-125 / DSM 18197 / FERM 7344 / JCM 9153 / C-125) (Bacillus halodurans).